We begin with the raw amino-acid sequence, 248 residues long: UDP-2,3-diacylglucosamine hydrolase (248 aa).

Residues D7, H9, D40, N78, and H113 each contribute to the Mn(2+) site. 78–79 (NR) is a binding site for substrate. D121, S159, T163, K166, and H194 together coordinate substrate. 2 residues coordinate Mn(2+): H194 and H196.

Belongs to the LpxH family. It depends on Mn(2+) as a cofactor.

The protein localises to the cell inner membrane. The enzyme catalyses UDP-2-N,3-O-bis[(3R)-3-hydroxytetradecanoyl]-alpha-D-glucosamine + H2O = 2-N,3-O-bis[(3R)-3-hydroxytetradecanoyl]-alpha-D-glucosaminyl 1-phosphate + UMP + 2 H(+). Its pathway is glycolipid biosynthesis; lipid IV(A) biosynthesis; lipid IV(A) from (3R)-3-hydroxytetradecanoyl-[acyl-carrier-protein] and UDP-N-acetyl-alpha-D-glucosamine: step 4/6. In terms of biological role, hydrolyzes the pyrophosphate bond of UDP-2,3-diacylglucosamine to yield 2,3-diacylglucosamine 1-phosphate (lipid X) and UMP by catalyzing the attack of water at the alpha-P atom. Involved in the biosynthesis of lipid A, a phosphorylated glycolipid that anchors the lipopolysaccharide to the outer membrane of the cell. The protein is UDP-2,3-diacylglucosamine hydrolase of Pseudomonas fluorescens (strain Pf0-1).